The primary structure comprises 242 residues: Proteasome subunit alpha (242 aa).

Belongs to the peptidase T1A family. In terms of assembly, the 20S proteasome core is composed of 14 alpha and 14 beta subunits that assemble into four stacked heptameric rings, resulting in a barrel-shaped structure. The two inner rings, each composed of seven catalytic beta subunits, are sandwiched by two outer rings, each composed of seven alpha subunits. The catalytic chamber with the active sites is on the inside of the barrel. Has a gated structure, the ends of the cylinder being occluded by the N-termini of the alpha-subunits. Is capped at one or both ends by the proteasome regulatory ATPase, PAN.

It localises to the cytoplasm. Its activity is regulated as follows. The formation of the proteasomal ATPase PAN-20S proteasome complex, via the docking of the C-termini of PAN into the intersubunit pockets in the alpha-rings, triggers opening of the gate for substrate entry. Interconversion between the open-gate and close-gate conformations leads to a dynamic regulation of the 20S proteasome proteolysis activity. Its function is as follows. Component of the proteasome core, a large protease complex with broad specificity involved in protein degradation. In Sulfolobus acidocaldarius (strain ATCC 33909 / DSM 639 / JCM 8929 / NBRC 15157 / NCIMB 11770), this protein is Proteasome subunit alpha.